Here is a 213-residue protein sequence, read N- to C-terminus: LexA repressor (213 aa).

Residues 29–49 (RAEIAQALGFRSPNAAEDHLK) constitute a DNA-binding region (H-T-H motif). Catalysis depends on for autocatalytic cleavage activity residues S131 and K168.

The protein belongs to the peptidase S24 family. Homodimer.

It catalyses the reaction Hydrolysis of Ala-|-Gly bond in repressor LexA.. Its function is as follows. Represses a number of genes involved in the response to DNA damage (SOS response), including recA and lexA. In the presence of single-stranded DNA, RecA interacts with LexA causing an autocatalytic cleavage which disrupts the DNA-binding part of LexA, leading to derepression of the SOS regulon and eventually DNA repair. This chain is LexA repressor, found in Bordetella avium (strain 197N).